Reading from the N-terminus, the 1450-residue chain is Inactive serine/threonine-protein kinase TEX14 (1450 aa).

ANK repeat units lie at residues 27-54, 55-84, and 88-117; these read LHEY…AVNT, QGQS…DPNH, and DGST…DLRL. Ser-175 and Ser-186 each carry phosphoserine. The Protein kinase domain maps to 199–512; sequence IISAQNIYSF…ILKNDLKEFI (314 aa). Residues 205-213 and Lys-267 each bind ATP; that span reads IYSFGFGKF. Ser-431 is subject to Phosphoserine; by PLK1. Phosphoserine is present on residues Ser-561 and Ser-662. The tract at residues 700–720 is disordered; it reads SDSLGSLNLPEPTREAKGKTS. The GPPX3Y signature appears at 791 to 797; that stretch reads GPPSLAY. Disordered stretches follow at residues 852 to 906, 947 to 977, 992 to 1012, and 1035 to 1062; these read VSEE…MASV, PPWN…RGPE, DEPK…DKNK, and QPEQ…SSPI. Composition is skewed to polar residues over residues 875-886 and 894-906; these read KQSTGEQLPSTQ and KNTN…MASV. The D-box signature appears at 889-897; sequence RESLEKNTN. The span at 992-1011 shows a compositional bias: basic and acidic residues; sequence DEPKGNTKFGKMDNSDCDKN. Over residues 1038–1061 the composition is skewed to polar residues; it reads QNEASQASCDTSVGTEKFYSTSSP. 2 positions are modified to phosphoserine: Ser-1060 and Ser-1221. 2 disordered regions span residues 1261-1282 and 1300-1418; these read THAT…QQHL and KQQQ…SLGT. Composition is skewed to polar residues over residues 1300–1311 and 1332–1344; these read KQQQVSSLASHE and TNSS…LSSR. Residues Ser-1357 and Ser-1358 each carry the phosphoserine modification. 2 stretches are compositionally biased toward basic and acidic residues: residues 1383–1397 and 1404–1413; these read STRE…VVEQ and SIKPERRESD. Ser-1412 and Ser-1449 each carry phosphoserine.

The protein belongs to the protein kinase superfamily. As to quaternary structure, interacts with KIF23 and RBM44. Interacts with CEP55; inhibiting interaction between CEP55 and PDCD6IP/ALIX and TSG101. In terms of processing, phosphorylated on Thr residues by CDK1 during early phases of mitosis, promoting the interaction with PLK1 and recruitment to kinetochores. Phosphorylated on Ser-431 by PLK1 during late prometaphase promotes the rapid depletion from kinetochores and its subsequent degradation by the APC/C complex. As to expression, detected in testis and spermatogonia. Not detectable in the other tissues tested.

It localises to the cytoplasm. The protein localises to the midbody. The protein resides in the chromosome. It is found in the centromere. Its subcellular location is the kinetochore. Required both for the formation of intercellular bridges during meiosis and for kinetochore-microtubule attachment during mitosis. Intercellular bridges are evolutionarily conserved structures that connect differentiating germ cells and are required for spermatogenesis and male fertility. Acts by promoting the conversion of midbodies into intercellular bridges via its interaction with CEP55: interaction with CEP55 inhibits the interaction between CEP55 and PDCD6IP/ALIX and TSG101, blocking cell abscission and leading to transform midbodies into intercellular bridges. Also plays a role during mitosis: recruited to kinetochores by PLK1 during early mitosis and regulates the maturation of the outer kinetochores and microtubule attachment. Has no protein kinase activity in vitro. This chain is Inactive serine/threonine-protein kinase TEX14 (Tex14), found in Mus musculus (Mouse).